We begin with the raw amino-acid sequence, 493 residues long: Succinate-semialdehyde dehydrogenase [NADP(+)] 2 (493 aa).

242–247 contributes to the NAD(+) binding site; that stretch reads GSTNVG. Residue Glu-264 is part of the active site. Cys-298 (nucleophile) is an active-site residue.

The protein belongs to the aldehyde dehydrogenase family. Homotetramer.

It localises to the cytoplasm. It carries out the reaction succinate semialdehyde + NAD(+) + H2O = succinate + NADH + 2 H(+). It catalyses the reaction succinate semialdehyde + NADP(+) + H2O = succinate + NADPH + 2 H(+). Its pathway is amino-acid degradation; 4-aminobutanoate degradation. Catalyzes the oxidation of succinate semialdehyde to succinate. Can utilize both NAD(+) or NADP(+) as a coenzyme. Functions in the GABA shunt, which allows to bypass 2 reactions in the TCA cycle by removing alpha-ketoglutarate from the cycle and feeding succinate and NADH back into the cycle. The chain is Succinate-semialdehyde dehydrogenase [NADP(+)] 2 (ssd2) from Schizosaccharomyces pombe (strain 972 / ATCC 24843) (Fission yeast).